The following is a 1393-amino-acid chain: Polarized growth protein RAX2 (1393 aa).

The first 21 residues, 1–21, serve as a signal peptide directing secretion; that stretch reads MLVQFQQLLLLLISIIKLCQA. Residues 22 to 1329 lie on the Extracellular side of the membrane; sequence DDNDNSFFQP…TNKNLSRGKV (1308 aa). Residues Asn-62, Asn-85, Asn-105, Asn-125, Asn-133, Asn-139, Asn-164, Asn-186, Asn-195, Asn-212, Asn-256, Asn-260, Asn-266, Asn-269, Asn-362, Asn-398, Asn-405, Asn-479, Asn-536, Asn-542, Asn-565, Asn-599, Asn-646, Asn-649, Asn-653, Asn-674, Asn-689, Asn-696, Asn-702, Asn-714, Asn-747, Asn-764, Asn-768, Asn-792, Asn-829, Asn-863, Asn-899, Asn-935, Asn-946, Asn-958, Asn-985, Asn-1020, Asn-1030, Asn-1041, Asn-1213, Asn-1232, Asn-1262, and Asn-1323 are each glycosylated (N-linked (GlcNAc...) asparagine). A helical membrane pass occupies residues 1330–1350; sequence VGISLACALGSTTLLGLLYII. The Cytoplasmic portion of the chain corresponds to 1351-1393; that stretch reads PYFALFKNRKDGYFQPERIHEDEMMDAVNPEDLLHEIDLQREK.

This sequence belongs to the RAX2 family.

It localises to the cell membrane. The protein resides in the cell tip. Its function is as follows. Required for establishing sites of emergence of yeast and hyphal daughters and for maintaining the linearity of hyphal growth, but not involved in responses that require a reorientation of the direction of already established hyphal growth (tropisms). Does not play a role in penetration or injury of human epithelial cells. The sequence is that of Polarized growth protein RAX2 from Candida albicans (strain SC5314 / ATCC MYA-2876) (Yeast).